The following is a 166-amino-acid chain: MSKVLEAKQSAVEEIKTKLSASASTVIVDYRGLNVGEITDLRKQLRDAGIEFKVYKNSLTRRAVEANGYEGLEGALTGPNAIAFSNEDVVAPAKILNDFAKDHEALEIKAGVIEGKVASLEEIKALATLPSREGLLSMLCNVLQAPVRGLAIATKAVADQKEGQEA.

It belongs to the universal ribosomal protein uL10 family. In terms of assembly, part of the ribosomal stalk of the 50S ribosomal subunit. The N-terminus interacts with L11 and the large rRNA to form the base of the stalk. The C-terminus forms an elongated spine to which L12 dimers bind in a sequential fashion forming a multimeric L10(L12)X complex.

Its function is as follows. Forms part of the ribosomal stalk, playing a central role in the interaction of the ribosome with GTP-bound translation factors. The polypeptide is Large ribosomal subunit protein uL10 (Listeria innocua serovar 6a (strain ATCC BAA-680 / CLIP 11262)).